The following is a 432-amino-acid chain: Amino-acid acetyltransferase (432 aa).

The N-acetyltransferase domain occupies 286 to 425 (EQLREAGIED…ASLYNFQRNS (140 aa)).

Belongs to the acetyltransferase family. ArgA subfamily.

The protein resides in the cytoplasm. It catalyses the reaction L-glutamate + acetyl-CoA = N-acetyl-L-glutamate + CoA + H(+). It participates in amino-acid biosynthesis; L-arginine biosynthesis; N(2)-acetyl-L-ornithine from L-glutamate: step 1/4. The polypeptide is Amino-acid acetyltransferase (Pseudomonas paraeruginosa (strain DSM 24068 / PA7) (Pseudomonas aeruginosa (strain PA7))).